The sequence spans 254 residues: MTILPISAFSDNYIWAFIDKIAGVLDCVDPGEAAPIIRFAQSNQLTLRTILLTHHHYDHIGGVDSLIKQWPSCKVYGPIDERINNVTHPIKQGQSVQVGSLHFHILFNPGHTSTHISYYEPQKGWLFCGDTLFSAGCGRVFDGTIEELHESLLLFKKLPRNTKVFCAHEYTLQNLKFAHTVEPCNSSVINYMQQILKQPSPCTLPSNIDLELSINPFLRTDKEQVKQYALSHGANSSDSLDVFKVLRNQKNSFK.

Residues H54, H56, D58, H59, H111, D130, and H168 each coordinate Zn(2+).

This sequence belongs to the metallo-beta-lactamase superfamily. Glyoxalase II family. Monomer. Zn(2+) is required as a cofactor.

It carries out the reaction an S-(2-hydroxyacyl)glutathione + H2O = a 2-hydroxy carboxylate + glutathione + H(+). The protein operates within secondary metabolite metabolism; methylglyoxal degradation; (R)-lactate from methylglyoxal: step 2/2. In terms of biological role, thiolesterase that catalyzes the hydrolysis of S-D-lactoyl-glutathione to form glutathione and D-lactic acid. The protein is Hydroxyacylglutathione hydrolase of Legionella pneumophila (strain Corby).